The sequence spans 310 residues: Ribosomal protein uL3 glutamine methyltransferase (310 aa).

Belongs to the protein N5-glutamine methyltransferase family. PrmB subfamily.

It carries out the reaction L-glutaminyl-[ribosomal protein uL3] + S-adenosyl-L-methionine = N(5)-methyl-L-glutaminyl-[ribosomal protein uL3] + S-adenosyl-L-homocysteine + H(+). In terms of biological role, methylates large ribosomal subunit protein uL3 on a specific glutamine residue. This Vibrio anguillarum (strain ATCC 68554 / 775) (Listonella anguillarum) protein is Ribosomal protein uL3 glutamine methyltransferase.